The chain runs to 319 residues: Sulfate adenylyltransferase subunit 2 (319 aa).

2 disordered regions span residues Met-1–Pro-22 and Arg-296–Phe-319.

Belongs to the PAPS reductase family. CysD subfamily.

It catalyses the reaction sulfate + ATP + H(+) = adenosine 5'-phosphosulfate + diphosphate. The protein operates within antibiotic biosynthesis; mitomycin C biosynthesis. In terms of biological role, with CysN forms the ATP sulfurylase (ATPS) that catalyzes the adenylation of sulfate producing adenosine 5'-phosphosulfate (APS) and diphosphate, the first enzymatic step in sulfur assimilation pathway. APS synthesis involves the formation of a high-energy phosphoric-sulfuric acid anhydride bond driven by GTP hydrolysis by CysN coupled to ATP hydrolysis by CysD. This Streptomyces lavendulae protein is Sulfate adenylyltransferase subunit 2 (mmcV).